Consider the following 218-residue polypeptide: N-(5'-phosphoribosyl)anthranilate isomerase (218 aa).

Belongs to the TrpF family.

It catalyses the reaction N-(5-phospho-beta-D-ribosyl)anthranilate = 1-(2-carboxyphenylamino)-1-deoxy-D-ribulose 5-phosphate. The protein operates within amino-acid biosynthesis; L-tryptophan biosynthesis; L-tryptophan from chorismate: step 3/5. In Stenotrophomonas maltophilia (strain R551-3), this protein is N-(5'-phosphoribosyl)anthranilate isomerase.